Here is a 911-residue protein sequence, read N- to C-terminus: Protein argonaute 4B (911 aa).

Disordered stretches follow at residues 1 to 51 (MDAH…RPGL) and 149 to 171 (KTAA…KRVR). The PAZ domain occupies 281–396 (PVIDFLLANQ…FPIELCSLIP (116 aa)). The Piwi domain occupies 565 to 872 (FLLCLLPERK…AAAQVGTFLK (308 aa)).

Belongs to the argonaute family. Ago subfamily.

Functionally, probably involved in the RNA silencing pathway. May bind to short RNAs such as microRNAs (miRNAs) or short interfering RNAs (siRNAs), and represses the translation of mRNAs which are complementary to them. This chain is Protein argonaute 4B (AGO4B), found in Oryza sativa subsp. japonica (Rice).